We begin with the raw amino-acid sequence, 99 residues long: Nucleoid-associated protein SAG1747 (99 aa).

Low complexity predominate over residues 1–10 (MMNMQNMMRQ). Residues 1–20 (MMNMQNMMRQAQKLQKQMEQ) are disordered.

This sequence belongs to the YbaB/EbfC family. Homodimer.

The protein resides in the cytoplasm. Its subcellular location is the nucleoid. In terms of biological role, binds to DNA and alters its conformation. May be involved in regulation of gene expression, nucleoid organization and DNA protection. The protein is Nucleoid-associated protein SAG1747 of Streptococcus agalactiae serotype V (strain ATCC BAA-611 / 2603 V/R).